The primary structure comprises 304 residues: Ribosomal RNA small subunit methyltransferase H (304 aa).

S-adenosyl-L-methionine contacts are provided by residues 47–49 (GGH), aspartate 66, phenylalanine 93, aspartate 108, and glutamine 115.

This sequence belongs to the methyltransferase superfamily. RsmH family.

The protein localises to the cytoplasm. The enzyme catalyses cytidine(1402) in 16S rRNA + S-adenosyl-L-methionine = N(4)-methylcytidine(1402) in 16S rRNA + S-adenosyl-L-homocysteine + H(+). Functionally, specifically methylates the N4 position of cytidine in position 1402 (C1402) of 16S rRNA. This is Ribosomal RNA small subunit methyltransferase H from Prochlorococcus marinus (strain NATL1A).